A 1794-amino-acid polypeptide reads, in one-letter code: Non-reducing polyketide synthase nscA (1794 aa).

The interval 19–256 (DLKDLFRRLH…PLPVYDGLCH (238 aa)) is N-terminal acylcarrier protein transacylase domain (SAT). In terms of domain architecture, Ketosynthase family 3 (KS3) spans 389–822 (ASKLAIVGMA…GGNTTVLLED (434 aa)). The span at 428-440 (DRFDLNTHYDPTG) shows a compositional bias: basic and acidic residues. A disordered region spans residues 428-448 (DRFDLNTHYDPTGKTENATQT). Active-site for beta-ketoacyl synthase activity residues include Cys-562, His-697, and His-740. The malonyl-CoA:ACP transacylase (MAT) domain stretch occupies residues 927–1230 (TFTGQGAYYS…SVISSCRRNE (304 aa)). Residues 1314–1633 (TSLVHQITTE…RLLMDRFFSP (320 aa)) form a product template (PT) domain region. Residues 1318-1454 (HQITTETVEA…CVVRFEDPAA (137 aa)) are N-terminal hotdog fold. Residues 1318–1628 (HQITTETVEA…FRRVPRLLMD (311 aa)) enclose the PKS/mFAS DH domain. Residue His-1350 is the Proton acceptor; for dehydratase activity of the active site. Residues 1482 to 1628 (ASKLSKPLAY…FRRVPRLLMD (147 aa)) are C-terminal hotdog fold. Residue Asp-1539 is the Proton donor; for dehydratase activity of the active site. A disordered region spans residues 1637–1719 (SHTEKQLQET…ATSDRGDSTD (83 aa)). Positions 1644–1655 (QETAPSATNVKK) are enriched in polar residues. A Carrier domain is found at 1717–1794 (STDAGVVGQC…EMTAWLEEYC (78 aa)). Ser-1754 bears the O-(pantetheine 4'-phosphoryl)serine mark.

Pantetheine 4'-phosphate serves as cofactor.

It functions in the pathway secondary metabolite biosynthesis. Functionally, non-reducing polyketide synthase; part of the gene cluster that mediates the biosynthesis of neosartoricin, a prenylated anthracenone that exhibits T-cell antiproliferative activity, suggestive of a physiological role as an immunosuppressive agent. The non-reducing polyketide synthase nscA probably synthesizes and cyclizes the decaketide backbone. The hydrolase nscB then mediates the product release through hydrolysis followed by spontaneous decarboxylation. The prenyltransferase nscD catalyzes the addition of the dimethylallyl group to the aromatic C5. The FAD-dependent monooxygenase nscC is then responsible for the stereospecific hydroxylation at C2. There is no gene encoding O-acetyltransferase in the nsc gene cluster; thus, the last step of 2-O-acetylation leading to neosartoricin may be catalyzed by an unidentified O-acetyltransferase. The polypeptide is Non-reducing polyketide synthase nscA (Aspergillus fumigatus (strain ATCC MYA-4609 / CBS 101355 / FGSC A1100 / Af293) (Neosartorya fumigata)).